We begin with the raw amino-acid sequence, 148 residues long: UPF0591 membrane protein C15E1.02c (148 aa).

3 consecutive transmembrane segments (helical) span residues 14–34 (AILLGIAFDHAASFLVYGPLM), 80–102 (LLQLTGTVTLKGAFFVGLYVFGA), and 122–142 (ILVKTISSLVKSVGLSVALIG).

The protein belongs to the UPF0591 family.

Its subcellular location is the membrane. In Schizosaccharomyces pombe (strain 972 / ATCC 24843) (Fission yeast), this protein is UPF0591 membrane protein C15E1.02c.